The following is a 280-amino-acid chain: Shikimate dehydrogenase (NADP(+)) (280 aa).

Shikimate-binding positions include 20–22 (SLS) and Thr67. Catalysis depends on Lys71, which acts as the Proton acceptor. Residues Asn92 and Asp107 each coordinate shikimate. Residues 131-135 (GAGGA) and Gly220 contribute to the NADP(+) site. Tyr222 provides a ligand contact to shikimate. Gly243 contacts NADP(+).

Belongs to the shikimate dehydrogenase family. In terms of assembly, homodimer.

It catalyses the reaction shikimate + NADP(+) = 3-dehydroshikimate + NADPH + H(+). Its pathway is metabolic intermediate biosynthesis; chorismate biosynthesis; chorismate from D-erythrose 4-phosphate and phosphoenolpyruvate: step 4/7. Functionally, involved in the biosynthesis of the chorismate, which leads to the biosynthesis of aromatic amino acids. Catalyzes the reversible NADPH linked reduction of 3-dehydroshikimate (DHSA) to yield shikimate (SA). The chain is Shikimate dehydrogenase (NADP(+)) from Maricaulis maris (strain MCS10) (Caulobacter maris).